The following is a 578-amino-acid chain: Proline--tRNA ligase (578 aa).

The protein belongs to the class-II aminoacyl-tRNA synthetase family. ProS type 1 subfamily. In terms of assembly, homodimer.

It localises to the cytoplasm. The enzyme catalyses tRNA(Pro) + L-proline + ATP = L-prolyl-tRNA(Pro) + AMP + diphosphate. Its function is as follows. Catalyzes the attachment of proline to tRNA(Pro) in a two-step reaction: proline is first activated by ATP to form Pro-AMP and then transferred to the acceptor end of tRNA(Pro). As ProRS can inadvertently accommodate and process non-cognate amino acids such as alanine and cysteine, to avoid such errors it has two additional distinct editing activities against alanine. One activity is designated as 'pretransfer' editing and involves the tRNA(Pro)-independent hydrolysis of activated Ala-AMP. The other activity is designated 'posttransfer' editing and involves deacylation of mischarged Ala-tRNA(Pro). The misacylated Cys-tRNA(Pro) is not edited by ProRS. The protein is Proline--tRNA ligase of Burkholderia cenocepacia (strain ATCC BAA-245 / DSM 16553 / LMG 16656 / NCTC 13227 / J2315 / CF5610) (Burkholderia cepacia (strain J2315)).